The sequence spans 286 residues: Ribosomal RNA small subunit methyltransferase A (286 aa).

Residues Asn-31, Ile-33, Gly-58, Glu-80, Asp-106, and Asn-125 each contribute to the S-adenosyl-L-methionine site.

This sequence belongs to the class I-like SAM-binding methyltransferase superfamily. rRNA adenine N(6)-methyltransferase family. RsmA subfamily.

It localises to the cytoplasm. It carries out the reaction adenosine(1518)/adenosine(1519) in 16S rRNA + 4 S-adenosyl-L-methionine = N(6)-dimethyladenosine(1518)/N(6)-dimethyladenosine(1519) in 16S rRNA + 4 S-adenosyl-L-homocysteine + 4 H(+). Its function is as follows. Specifically dimethylates two adjacent adenosines (A1518 and A1519) in the loop of a conserved hairpin near the 3'-end of 16S rRNA in the 30S particle. May play a critical role in biogenesis of 30S subunits. The polypeptide is Ribosomal RNA small subunit methyltransferase A (Wolbachia pipientis wMel).